The following is a 329-amino-acid chain: Quinate dehydrogenase (329 aa).

It catalyses the reaction L-quinate + NAD(+) = 3-dehydroquinate + NADH + H(+). It participates in aromatic compound metabolism; 3,4-dihydroxybenzoate biosynthesis; 3-dehydroquinate from D-quinate (NAD(+) route): step 1/1. This chain is Quinate dehydrogenase (qutB), found in Emericella nidulans (strain FGSC A4 / ATCC 38163 / CBS 112.46 / NRRL 194 / M139) (Aspergillus nidulans).